An 867-amino-acid polypeptide reads, in one-letter code: Replication origin-binding protein (867 aa).

The interval 1-39 (MNVATCTHQTHHAARAPGATSAPGAASGDPLGARRPIGD) is disordered. Positions 15 to 28 (RAPGATSAPGAASG) are enriched in low complexity. The 166-residue stretch at 86-251 (ASAPTARCVT…CSLRGEKNVH (166 aa)) folds into the Helicase ATP-binding domain. Residue 99–106 (APMGSGKT) coordinates ATP.

Belongs to the herpesviridae OriBP family. In terms of assembly, homodimer. Interacts with the major DNA-binding protein ICP8. Interacts with the helicase/primase component UL8 and the polymerase accessory protein UL42.

The protein resides in the host nucleus. Its function is as follows. Functions as a docking protein to recruit essential components of the viral replication machinery to viral DNA origins. In the presence of the major DNA-binding protein, opens dsDNA leading to a conformational change in the origin that facilitates DNA unwinding and subsequent replication. The chain is Replication origin-binding protein from Human herpesvirus 2 (strain HG52) (HHV-2).